The following is a 436-amino-acid chain: Serine hydroxymethyltransferase (436 aa).

Residues Leu120 and 124-126 (GHL) each bind (6S)-5,6,7,8-tetrahydrofolate. Lys229 is modified (N6-(pyridoxal phosphate)lysine).

It belongs to the SHMT family. Homodimer. Requires pyridoxal 5'-phosphate as cofactor.

It is found in the cytoplasm. The catalysed reaction is (6R)-5,10-methylene-5,6,7,8-tetrahydrofolate + glycine + H2O = (6S)-5,6,7,8-tetrahydrofolate + L-serine. The protein operates within one-carbon metabolism; tetrahydrofolate interconversion. It participates in amino-acid biosynthesis; glycine biosynthesis; glycine from L-serine: step 1/1. In terms of biological role, catalyzes the reversible interconversion of serine and glycine with tetrahydrofolate (THF) serving as the one-carbon carrier. This reaction serves as the major source of one-carbon groups required for the biosynthesis of purines, thymidylate, methionine, and other important biomolecules. Also exhibits THF-independent aldolase activity toward beta-hydroxyamino acids, producing glycine and aldehydes, via a retro-aldol mechanism. The chain is Serine hydroxymethyltransferase from Roseiflexus castenholzii (strain DSM 13941 / HLO8).